The primary structure comprises 190 residues: Transcription factor E (190 aa).

The HTH TFE/IIEalpha-type domain maps to 4–87 (KNKALLEIAK…YWHLETKRLP (84 aa)). The segment at 170-190 (PSPKKEKKKTRAKAKRKTRKK) is disordered. Over residues 174–190 (KEKKKTRAKAKRKTRKK) the composition is skewed to basic residues.

Belongs to the TFE family. In terms of assembly, monomer. Interaction with RNA polymerase subunits RpoF and RpoE is necessary for Tfe stimulatory transcription activity. Able to interact with Tbp and RNA polymerase in the absence of DNA promoter. Interacts both with the preinitiation and elongation complexes.

In terms of biological role, transcription factor that plays a role in the activation of archaeal genes transcribed by RNA polymerase. Facilitates transcription initiation by enhancing TATA-box recognition by TATA-box-binding protein (Tbp), and transcription factor B (Tfb) and RNA polymerase recruitment. Not absolutely required for transcription in vitro, but particularly important in cases where Tbp or Tfb function is not optimal. It dynamically alters the nucleic acid-binding properties of RNA polymerases by stabilizing the initiation complex and destabilizing elongation complexes. Seems to translocate with the RNA polymerase following initiation and acts by binding to the non template strand of the transcription bubble in elongation complexes. This Pyrococcus abyssi (strain GE5 / Orsay) protein is Transcription factor E.